A 161-amino-acid polypeptide reads, in one-letter code: ATP synthase subunit b (161 aa).

A helical membrane pass occupies residues 11–31 (AISFVLFVWFCMKYIWPPIIL).

This sequence belongs to the ATPase B chain family. In terms of assembly, F-type ATPases have 2 components, F(1) - the catalytic core - and F(0) - the membrane proton channel. F(1) has five subunits: alpha(3), beta(3), gamma(1), delta(1), epsilon(1). F(0) has three main subunits: a(1), b(2) and c(10-14). The alpha and beta chains form an alternating ring which encloses part of the gamma chain. F(1) is attached to F(0) by a central stalk formed by the gamma and epsilon chains, while a peripheral stalk is formed by the delta and b chains.

The protein resides in the cell membrane. F(1)F(0) ATP synthase produces ATP from ADP in the presence of a proton or sodium gradient. F-type ATPases consist of two structural domains, F(1) containing the extramembraneous catalytic core and F(0) containing the membrane proton channel, linked together by a central stalk and a peripheral stalk. During catalysis, ATP synthesis in the catalytic domain of F(1) is coupled via a rotary mechanism of the central stalk subunits to proton translocation. Its function is as follows. Component of the F(0) channel, it forms part of the peripheral stalk, linking F(1) to F(0). The polypeptide is ATP synthase subunit b (Buchnera aphidicola subsp. Acyrthosiphon pisum (strain APS) (Acyrthosiphon pisum symbiotic bacterium)).